Reading from the N-terminus, the 240-residue chain is Cysteine-rich venom protein ablomin (240 aa).

Positions 1–19 (MIVFIVLPILAAVLQQSSG) are cleaved as a signal peptide. Residues 38-166 (VDLHNSLRRS…EYSYFYVCQY (129 aa)) form the SCP domain. Cystine bridges form between Cys-75–Cys-153, Cys-92–Cys-167, Cys-148–Cys-164, Cys-186–Cys-193, Cys-189–Cys-198, Cys-202–Cys-235, Cys-211–Cys-229, and Cys-220–Cys-233. The 34-residue stretch at 202-235 (CTQEDVFTNCNSLVQQSNCQHNYIKTNCPASCFC) folds into the ShKT domain.

This sequence belongs to the CRISP family. In terms of tissue distribution, expressed by the venom gland.

The protein localises to the secreted. Its function is as follows. Blocks contraction of smooth muscle elicited by high potassium-induced depolarization, but does not block caffeine-stimulated contraction. Since high potassium-treatment activates voltage-gated channels and caffeine exposure activates ryanodine receptors, this toxin may target L-type voltage-gated calcium channels (Cav) (and not ryanodine receptors) on smooth muscle. This toxin also shows a little inhibition on cyclic nucleotide-gated CNGA1 channel. The chain is Cysteine-rich venom protein ablomin from Gloydius blomhoffii (Mamushi).